Here is a 425-residue protein sequence, read N- to C-terminus: MAVPAASSIVSYGGAATSNFLTTPVTPFLAGFYNSNFVTDRINSCAPYRVDRIRKQLQDEEENGYPPADDRRRGALFCRSGTWLEMLPIENPDDGSTRVKVHGTKEESSKFSIVEFVSVAMSLVSIRGVETKNFICMDPSGKLYATPSSNYSTECVFLEEMMENYYNLYASCAYGDRFNPWYIELRRSGKPRRGPNSKKRRKASHFLVVHHDLDRLRSPVPNGNDVTDLVVASLFHQPPSHPLFRQQTVTKPPNPHRISNLRAKVEMTNQAEKQRLLEEKKRRREKKKRRREDRLRKEEQIREARRQELKSLREEELRRRYQQQQQQQASTQTRYNRPQNPANPYPTYRPLPTRSTVQSPRPAYNPYWQSPVTQAPHHNSHHHHHHHPRVSSSSDPQQRHQSQQHYLAQTVSNPNRQNVNYQRYP.

Disordered stretches follow at residues 277–298 and 314–425; these read LEEK…LRKE and EEEL…QRYP. Over residues 281–291 the composition is skewed to basic residues; the sequence is KRRREKKKRRR. Residues 329-340 show a composition bias toward polar residues; the sequence is ASTQTRYNRPQN. The span at 378–389 shows a compositional bias: basic residues; sequence HNSHHHHHHHPR. The span at 395–425 shows a compositional bias: polar residues; it reads DPQQRHQSQQHYLAQTVSNPNRQNVNYQRYP.

It belongs to the heparin-binding growth factors family. In terms of assembly, interacts with pal-1. In terms of tissue distribution, expressed in pharynx, CAN neuron and body wall muscles.

The protein resides in the nucleus. Its subcellular location is the membrane. Its function is as follows. Required for larval development. Probably by binding receptor egl-15, negatively regulates membrane protrusion from body wall muscles during larval development. The chain is Protein let-756 (let-756) from Caenorhabditis elegans.